A 390-amino-acid chain; its full sequence is Putative nickel insertion protein (390 aa).

Belongs to the LarC family.

This Myxococcus xanthus (strain DK1622) protein is Putative nickel insertion protein.